A 41-amino-acid chain; its full sequence is Photosystem II reaction center protein L (41 aa).

A helical membrane pass occupies residues 20–40 (LFLGLLLVFVLGILSPATSLT).

The protein belongs to the PsbL family. In terms of assembly, PSII is composed of 1 copy each of membrane proteins PsbA, PsbB, PsbC, PsbD, PsbE, PsbF, PsbH, PsbI, PsbJ, PsbK, PsbL, PsbM, PsbT, PsbX, PsbY, PsbZ, Psb30/Ycf12, peripheral proteins PsbO, CyanoQ (PsbQ), PsbU, PsbV and a large number of cofactors. It forms dimeric complexes.

Its subcellular location is the cellular thylakoid membrane. In terms of biological role, one of the components of the core complex of photosystem II (PSII). PSII is a light-driven water:plastoquinone oxidoreductase that uses light energy to abstract electrons from H(2)O, generating O(2) and a proton gradient subsequently used for ATP formation. It consists of a core antenna complex that captures photons, and an electron transfer chain that converts photonic excitation into a charge separation. This subunit is found at the monomer-monomer interface and is required for correct PSII assembly and/or dimerization. This Synechococcus sp. (strain ATCC 27144 / PCC 6301 / SAUG 1402/1) (Anacystis nidulans) protein is Photosystem II reaction center protein L.